A 341-amino-acid polypeptide reads, in one-letter code: Protein pelota homolog (341 aa).

The protein belongs to the eukaryotic release factor 1 family. Pelota subfamily. As to quaternary structure, monomer. A divalent metal cation is required as a cofactor.

It localises to the cytoplasm. Its function is as follows. May function in recognizing stalled ribosomes, interact with stem-loop structures in stalled mRNA molecules, and effect endonucleolytic cleavage of the mRNA. May play a role in the release non-functional ribosomes and degradation of damaged mRNAs. Has endoribonuclease activity. In Sulfurisphaera tokodaii (strain DSM 16993 / JCM 10545 / NBRC 100140 / 7) (Sulfolobus tokodaii), this protein is Protein pelota homolog.